A 373-amino-acid chain; its full sequence is Potential protein lysine methyltransferase SET6 (373 aa).

Residues 12–338 form the SET domain; the sequence is PFFQVRQTKW…KDEQICIDYS (327 aa).

It belongs to the class V-like SAM-binding methyltransferase superfamily.

Functionally, involved in resistance to compounds that target ergosterol biosynthesis, including fenpropimorph, dyclonine, and alverine citrate. Since a deletion in the absence of these compounds does not have an effect on growth, is more likely to be involved in compound availability. The chain is Potential protein lysine methyltransferase SET6 (SET6) from Saccharomyces cerevisiae (strain ATCC 204508 / S288c) (Baker's yeast).